The sequence spans 234 residues: Bromodomain-containing protein DDB_G0271118 (234 aa).

One can recognise a Bromo domain in the interval 1–60 (MDLGTIKGELDNNGYSTIKDFTADVRLMFENALTYNADSSPIWKHAKTLLYFHRKHDEHV). Over residues 134 to 194 (NNNSNNNNNN…SSSSSSSSSS (61 aa)) the composition is skewed to low complexity. A disordered region spans residues 134 to 209 (NNNSNNNNNN…KKYSDEERRN (76 aa)).

The sequence is that of Bromodomain-containing protein DDB_G0271118 from Dictyostelium discoideum (Social amoeba).